A 226-amino-acid polypeptide reads, in one-letter code: Thymidylate kinase (226 aa).

16-23 serves as a coordination point for ATP; sequence GIDGAGKT.

Belongs to the thymidylate kinase family.

The catalysed reaction is dTMP + ATP = dTDP + ADP. Its function is as follows. Phosphorylation of dTMP to form dTDP in both de novo and salvage pathways of dTTP synthesis. The chain is Thymidylate kinase from Xanthomonas euvesicatoria pv. vesicatoria (strain 85-10) (Xanthomonas campestris pv. vesicatoria).